A 188-amino-acid polypeptide reads, in one-letter code: dCTP deaminase (188 aa).

DCTP is bound by residues 111-116 (KSTYAR), 135-137 (TLE), Gln-156, Tyr-170, and Gln-180. Glu-137 serves as the catalytic Proton donor/acceptor.

The protein belongs to the dCTP deaminase family. Homotrimer.

The catalysed reaction is dCTP + H2O + H(+) = dUTP + NH4(+). Its pathway is pyrimidine metabolism; dUMP biosynthesis; dUMP from dCTP (dUTP route): step 1/2. Catalyzes the deamination of dCTP to dUTP. This is dCTP deaminase from Paracidovorax citrulli (strain AAC00-1) (Acidovorax citrulli).